The sequence spans 316 residues: Pantothenate kinase (316 aa).

95–102 (GSVAVGKS) contributes to the ATP binding site.

Belongs to the prokaryotic pantothenate kinase family.

The protein localises to the cytoplasm. The enzyme catalyses (R)-pantothenate + ATP = (R)-4'-phosphopantothenate + ADP + H(+). It participates in cofactor biosynthesis; coenzyme A biosynthesis; CoA from (R)-pantothenate: step 1/5. The sequence is that of Pantothenate kinase from Shewanella baltica (strain OS223).